A 436-amino-acid chain; its full sequence is Gamma-glutamyl phosphate reductase (436 aa).

It belongs to the gamma-glutamyl phosphate reductase family.

Its subcellular location is the cytoplasm. The catalysed reaction is L-glutamate 5-semialdehyde + phosphate + NADP(+) = L-glutamyl 5-phosphate + NADPH + H(+). The protein operates within amino-acid biosynthesis; L-proline biosynthesis; L-glutamate 5-semialdehyde from L-glutamate: step 2/2. Its function is as follows. Catalyzes the NADPH-dependent reduction of L-glutamate 5-phosphate into L-glutamate 5-semialdehyde and phosphate. The product spontaneously undergoes cyclization to form 1-pyrroline-5-carboxylate. This Prochlorococcus marinus subsp. pastoris (strain CCMP1986 / NIES-2087 / MED4) protein is Gamma-glutamyl phosphate reductase.